A 258-amino-acid chain; its full sequence is UPF0246 protein mma_1385 (258 aa).

It belongs to the UPF0246 family.

The polypeptide is UPF0246 protein mma_1385 (Janthinobacterium sp. (strain Marseille) (Minibacterium massiliensis)).